Reading from the N-terminus, the 953-residue chain is Dual serine/threonine and tyrosine protein kinase (953 aa).

Residues 665 to 926 (PKLEREIGRG…VQSKLQDIYT (262 aa)) enclose the Protein kinase domain. ATP-binding positions include 671 to 679 (IGRGQYGVV) and K694. Residue D791 is the Proton acceptor of the active site. A disordered region spans residues 932 to 953 (REAEGGGGGGAKEQQNLKSDTL).

Belongs to the protein kinase superfamily. Ser/Thr protein kinase family.

It localises to the cytoplasm. Its subcellular location is the cell membrane. The protein resides in the apical cell membrane. The protein localises to the basolateral cell membrane. It is found in the cell junction. It carries out the reaction L-seryl-[protein] + ATP = O-phospho-L-seryl-[protein] + ADP + H(+). The enzyme catalyses L-threonyl-[protein] + ATP = O-phospho-L-threonyl-[protein] + ADP + H(+). It catalyses the reaction L-tyrosyl-[protein] + ATP = O-phospho-L-tyrosyl-[protein] + ADP + H(+). Functionally, may act as a positive regulator of ERK phosphorylation downstream of fibroblast growth factor-receptor activation. May induce both caspase-dependent apoptosis and caspase-independent cell death. May play a role in the embryonic development. The sequence is that of Dual serine/threonine and tyrosine protein kinase from Strongylocentrotus purpuratus (Purple sea urchin).